A 221-amino-acid chain; its full sequence is Endonuclease V (221 aa).

Residues aspartate 44 and aspartate 112 each contribute to the Mg(2+) site.

It belongs to the endonuclease V family. It depends on Mg(2+) as a cofactor.

The protein localises to the cytoplasm. It carries out the reaction Endonucleolytic cleavage at apurinic or apyrimidinic sites to products with a 5'-phosphate.. In terms of biological role, DNA repair enzyme involved in the repair of deaminated bases. Selectively cleaves double-stranded DNA at the second phosphodiester bond 3' to a deoxyinosine leaving behind the intact lesion on the nicked DNA. The chain is Endonuclease V from Nostoc punctiforme (strain ATCC 29133 / PCC 73102).